Here is a 930-residue protein sequence, read N- to C-terminus: GPI ethanolamine phosphate transferase 1 (930 aa).

Residues 1 to 8 lie on the Cytoplasmic side of the membrane; that stretch reads MARLGRTG. Residues 9-29 traverse the membrane as a helical segment; sequence FLTLAVVFHLIYAYSIFDIYF. Over 30–466 the chain is Lumenal; that stretch reads VSPIVSGMRP…LQTYDWLFLR (437 aa). Asn-148 carries N-linked (GlcNAc...) asparagine glycosylation. Residues 467–487 traverse the membrane as a helical segment; sequence TIVTFGYVGWIAYALTTVIHL. Residues 488-498 are Cytoplasmic-facing; that stretch reads HVLHGASESDR. A helical membrane pass occupies residues 499–519; sequence TTASISFFSSVLVALFSVFLY. Over 520–521 the chain is Lumenal; sequence QG. Residues 522 to 542 form a helical membrane-spanning segment; sequence SPWRYYLYGFFPIFFWEEVFA. The Cytoplasmic segment spans residues 543-569; sequence RRKAFHAGRAGALLLPKRDLHSNKVED. A helical transmembrane segment spans residues 570–590; the sequence is IDTITYGGAFMLLTGLLYLLF. At 591–611 the chain is on the lumenal side; that stretch reads EDEILGTSHQPAAVSRKGSRN. The chain crosses the membrane as a helical span at residues 612 to 632; that stretch reads IMGLQLGMVLLALIVTRSSAA. The Cytoplasmic segment spans residues 633–639; sequence SLQAKQG. Residues 640–660 traverse the membrane as a helical segment; that stretch reads LPFGNQVVGWGVLIASLLLPF. At 661-684 the chain is on the lumenal side; the sequence is AHRLYPNSHYLHRLMIIFLTFSPT. A helical membrane pass occupies residues 685–705; sequence FIILTISYEGLFYFAFCMTLV. Residues 706-761 lie on the Cytoplasmic side of the membrane; the sequence is TWVRLEHATYVYTAKPVAKQAQETIEPPKKANPGATTVVDGETYRFRTLTVSDARV. Residues 762 to 782 form a helical membrane-spanning segment; that stretch reads ALFFFFLLQSAFFSTGNIASI. The Lumenal portion of the chain corresponds to 783 to 803; it reads SSFSLDSVYRLIPVFNPFSQG. Residues 804–824 traverse the membrane as a helical segment; sequence ALLILKLLIPFAIISANLGIL. At 825-833 the chain is on the cytoplasmic side; that stretch reads NRRLEVAPS. The chain crosses the membrane as a helical span at residues 834–854; the sequence is ALFMVVMAISDVMTLNFFYMV. Topologically, residues 855–870 are lumenal; it reads RDEGSWLDIGTTISHF. Residues 871-891 traverse the membrane as a helical segment; that stretch reads CIASFLCTFVAGLEFLSEVFI. The Cytoplasmic portion of the chain corresponds to 892–930; that stretch reads SGVDFGLRTDAITASVPDIVNGITSKGQKDVPNGVEDKE.

Belongs to the PIGG/PIGN/PIGO family. PIGN subfamily.

The protein resides in the endoplasmic reticulum membrane. It functions in the pathway glycolipid biosynthesis; glycosylphosphatidylinositol-anchor biosynthesis. In terms of biological role, ethanolamine phosphate transferase involved in glycosylphosphatidylinositol-anchor biosynthesis. Transfers ethanolamine phosphate to the first alpha-1,4-linked mannose of the glycosylphosphatidylinositol precursor of GPI-anchor. The protein is GPI ethanolamine phosphate transferase 1 (mcd4) of Emericella nidulans (strain FGSC A4 / ATCC 38163 / CBS 112.46 / NRRL 194 / M139) (Aspergillus nidulans).